Reading from the N-terminus, the 482-residue chain is Protein translocase subunit SecY (482 aa).

The disordered stretch occupies residues 1-22 (MVIKKPANKVDKKSTFKSSNKK). Transmembrane regions (helical) follow at residues 41-61 (ILFT…TVPG), 92-112 (FSIL…VQLL), 137-157 (LTKI…IFTL), 177-197 (AFYY…MLWI), 201-221 (ITIK…IIIS), 243-263 (IFFS…LVIL), 303-323 (VIPV…SQII), 342-362 (FNTW…TFLY), 405-425 (VVGS…SKLT), and 426-446 (QLPS…SVAI).

It belongs to the SecY/SEC61-alpha family. As to quaternary structure, component of the Sec protein translocase complex. Heterotrimer consisting of SecY, SecE and SecG subunits. The heterotrimers can form oligomers, although 1 heterotrimer is thought to be able to translocate proteins. Interacts with the ribosome. Interacts with SecDF, and other proteins may be involved. Interacts with SecA.

It localises to the cell membrane. Its function is as follows. The central subunit of the protein translocation channel SecYEG. Consists of two halves formed by TMs 1-5 and 6-10. These two domains form a lateral gate at the front which open onto the bilayer between TMs 2 and 7, and are clamped together by SecE at the back. The channel is closed by both a pore ring composed of hydrophobic SecY resides and a short helix (helix 2A) on the extracellular side of the membrane which forms a plug. The plug probably moves laterally to allow the channel to open. The ring and the pore may move independently. This is Protein translocase subunit SecY from Mycoplasma capricolum subsp. capricolum (strain California kid / ATCC 27343 / NCTC 10154).